We begin with the raw amino-acid sequence, 113 residues long: Ig heavy chain V-III region E109 (113 aa).

Residues 1–113 form the Ig-like domain; it reads EVKLEESGGG…YWGQGTLVTV (113 aa). The cysteines at positions 22 and 98 are disulfide-linked.

The sequence is that of Ig heavy chain V-III region E109 from Mus musculus (Mouse).